The following is a 219-amino-acid chain: Probable nicotinate-nucleotide adenylyltransferase (219 aa).

Belongs to the NadD family.

The catalysed reaction is nicotinate beta-D-ribonucleotide + ATP + H(+) = deamido-NAD(+) + diphosphate. It participates in cofactor biosynthesis; NAD(+) biosynthesis; deamido-NAD(+) from nicotinate D-ribonucleotide: step 1/1. Its function is as follows. Catalyzes the reversible adenylation of nicotinate mononucleotide (NaMN) to nicotinic acid adenine dinucleotide (NaAD). The protein is Probable nicotinate-nucleotide adenylyltransferase of Pseudomonas putida (strain W619).